The chain runs to 384 residues: Interstitial collagenase (384 aa).

The first 25 residues, 1–25 (MLSGLWSSILALLGVFLQSVGEFRA), serve as a signal peptide directing secretion. The propeptide at 26–88 (ETQEQDVEIV…STCGVPDVGE (63 aa)) is activation peptide. Positions 79–86 (STCGVPDV) match the Cysteine switch motif. Zn(2+) is bound at residue C81. Ca(2+) is bound by residues D113 and D129. Zn(2+) is bound by residues H139 and D141. Ca(2+) is bound by residues D146, G147, G149, and N151. H154 lines the Zn(2+) pocket. G161, G163, and D165 together coordinate Ca(2+). A Zn(2+)-binding site is contributed by H167. Residues D169, E170, and E172 each coordinate Ca(2+). H189 provides a ligand contact to Zn(2+). E190 is a catalytic residue. 2 residues coordinate Zn(2+): H193 and H199. The disordered stretch occupies residues 218–239 (LSQDDIDGPSGNPVQPRGPQTP). Residues C242 and C381 are joined by a disulfide bond. Ca(2+) contacts are provided by D249, Q277, and D347. Hemopexin repeat units lie at residues 273–319 (ELGL…FGFP) and 333–381 (KQSM…WFNC).

It belongs to the peptidase M10A family. Ca(2+) is required as a cofactor. The cofactor is Zn(2+).

It is found in the secreted. The protein resides in the extracellular space. Its subcellular location is the extracellular matrix. The catalysed reaction is Cleavage of the triple helix of collagen at about three-quarters of the length of the molecule from the N-terminus, at 775-Gly-|-Ile-776 in the alpha1(I) chain. Cleaves synthetic substrates and alpha-macroglobulins at bonds where P1' is a hydrophobic residue.. With respect to regulation, can be activated without removal of the activation peptide. Cleaves collagens of types I, II, and III at one site in the helical domain. Also cleaves collagens of types VII and X. The polypeptide is Interstitial collagenase (Aquarana catesbeiana (American bullfrog)).